The following is a 201-amino-acid chain: Coiled-coil domain-containing protein 195 (201 aa).

A coiled-coil region spans residues 4-38 (DIQLMRLIQEMRAEIHKLEKENQALRMKLTASSQR). Disordered stretches follow at residues 28–72 (LRMK…DAAP) and 179–201 (SKNSSSLKHSPNQATNQLSIIAE). The segment covering 179 to 188 (SKNSSSLKHS) has biased composition (low complexity). A compositionally biased stretch (polar residues) spans 189–201 (PNQATNQLSIIAE).

This is Coiled-coil domain-containing protein 195 from Homo sapiens (Human).